Consider the following 469-residue polypeptide: Glutamate--tRNA ligase (469 aa).

A 'HIGH' region motif is present at residues 9–19; sequence PSPTGFLHVGG. The 'KMSKS' region motif lies at 236 to 240; the sequence is KLSKR. An ATP-binding site is contributed by lysine 239.

It belongs to the class-I aminoacyl-tRNA synthetase family. Glutamate--tRNA ligase type 1 subfamily. As to quaternary structure, monomer.

It is found in the cytoplasm. It carries out the reaction tRNA(Glu) + L-glutamate + ATP = L-glutamyl-tRNA(Glu) + AMP + diphosphate. In terms of biological role, catalyzes the attachment of glutamate to tRNA(Glu) in a two-step reaction: glutamate is first activated by ATP to form Glu-AMP and then transferred to the acceptor end of tRNA(Glu). This is Glutamate--tRNA ligase from Shewanella amazonensis (strain ATCC BAA-1098 / SB2B).